The chain runs to 75 residues: UPF0270 protein PFL_4336 (75 aa).

It belongs to the UPF0270 family.

This Pseudomonas fluorescens (strain ATCC BAA-477 / NRRL B-23932 / Pf-5) protein is UPF0270 protein PFL_4336.